A 163-amino-acid polypeptide reads, in one-letter code: Probable cobalt-precorrin-6B C(15)-methyltransferase (decarboxylating) (163 aa).

S-adenosyl-L-methionine is bound by residues T6, 30–34 (GCGSG), D51, and G75.

Belongs to the methyltransferase superfamily. Archaeal-type CbiT family.

The enzyme catalyses Co-precorrin-6B + S-adenosyl-L-methionine = Co-precorrin-7 + S-adenosyl-L-homocysteine + CO2. Its pathway is cofactor biosynthesis; adenosylcobalamin biosynthesis; cob(II)yrinate a,c-diamide from sirohydrochlorin (anaerobic route): step 8/10. Its function is as follows. Catalyzes the methylation of C-15 in cobalt-precorrin-6B followed by the decarboxylation of C-12 to form cobalt-precorrin-7. In Archaeoglobus fulgidus (strain ATCC 49558 / DSM 4304 / JCM 9628 / NBRC 100126 / VC-16), this protein is Probable cobalt-precorrin-6B C(15)-methyltransferase (decarboxylating).